The following is an 81-amino-acid chain: Extracellular matrix regulatory protein B (81 aa).

In terms of biological role, regulates the biosynthesis of the extracellular matrix and the biofilm formation. May act as an enhancer of biofilm gene expression. Acts in parallel to the pathway that governs SinR derepression. The chain is Extracellular matrix regulatory protein B from Bacillus subtilis (strain 168).